The sequence spans 368 residues: Phosphate acyltransferase (368 aa).

The protein belongs to the PlsX family. Homodimer. Probably interacts with PlsY.

It is found in the cytoplasm. The enzyme catalyses a fatty acyl-[ACP] + phosphate = an acyl phosphate + holo-[ACP]. The protein operates within lipid metabolism; phospholipid metabolism. Catalyzes the reversible formation of acyl-phosphate (acyl-PO(4)) from acyl-[acyl-carrier-protein] (acyl-ACP). This enzyme utilizes acyl-ACP as fatty acyl donor, but not acyl-CoA. The polypeptide is Phosphate acyltransferase (Methylibium petroleiphilum (strain ATCC BAA-1232 / LMG 22953 / PM1)).